The primary structure comprises 566 residues: Bacillolysin (566 aa).

A signal peptide spans 1-27; it reads MKKKSLALVLATGMAVTTFGGTGSAFA. The propeptide at 28–249 is activation peptide; sequence DSKNVLSTKK…KQDAKAVVKP (222 aa). Asp307, Asp309, Val311, and Asp388 together coordinate Ca(2+). His392 lines the Zn(2+) pocket. Glu393 is an active-site residue. Zn(2+)-binding residues include His396 and Glu416. The Ca(2+) site is built by Glu427, Asn433, Asp435, Glu437, Glu440, Tyr443, Thr444, Lys447, and Asp450. His481 functions as the Proton donor in the catalytic mechanism.

It belongs to the peptidase M4 family. It depends on Ca(2+) as a cofactor. Zn(2+) is required as a cofactor.

The protein localises to the secreted. It carries out the reaction Similar, but not identical, to that of thermolysin.. Extracellular zinc metalloprotease. The polypeptide is Bacillolysin (npr) (Bacillus cereus).